The sequence spans 107 residues: U1-lycotoxin-Ls1b (107 aa).

Positions 1-20 (MMKVLVVVALLVTLISYSSS) are cleaved as a signal peptide. A propeptide spanning residues 21–41 (EGIDDLEADELLSLMADEQTR) is cleaved from the precursor. Intrachain disulfides connect Cys-44–Cys-59, Cys-51–Cys-68, Cys-58–Cys-86, and Cys-70–Cys-84.

The protein belongs to the neurotoxin 19 (CSTX) family. 04 (U1-Lctx) subfamily. In terms of tissue distribution, expressed by the venom gland.

The protein resides in the secreted. The polypeptide is U1-lycotoxin-Ls1b (Lycosa singoriensis (Wolf spider)).